We begin with the raw amino-acid sequence, 177 residues long: Large ribosomal subunit protein uL6 (177 aa).

Belongs to the universal ribosomal protein uL6 family. As to quaternary structure, part of the 50S ribosomal subunit.

This protein binds to the 23S rRNA, and is important in its secondary structure. It is located near the subunit interface in the base of the L7/L12 stalk, and near the tRNA binding site of the peptidyltransferase center. In Rhizobium etli (strain CIAT 652), this protein is Large ribosomal subunit protein uL6.